The chain runs to 63 residues: Prokaryotic ubiquitin-like protein Pup (63 aa).

Residues 1–35 (MSGQQSQINAGGGNGQGGDTPEFDAGQVSINSAGT) are disordered. The interval 19–57 (DTPEFDAGQVSINSAGTDDLLDEIDGLLESNAEEFVRSY) is ARC ATPase binding. Glu63 is covalently cross-linked (Isoglutamyl lysine isopeptide (Glu-Lys) (interchain with K-? in acceptor proteins)).

It belongs to the prokaryotic ubiquitin-like protein family. As to quaternary structure, strongly interacts with the proteasome-associated ATPase ARC through a hydrophobic interface; the interacting region of Pup lies in its C-terminal half. There is one Pup binding site per ARC hexamer ring.

Its pathway is protein degradation; proteasomal Pup-dependent pathway. Functionally, protein modifier that is covalently attached to lysine residues of substrate proteins, thereby targeting them for proteasomal degradation. The tagging system is termed pupylation. The protein is Prokaryotic ubiquitin-like protein Pup of Corynebacterium aurimucosum (strain ATCC 700975 / DSM 44827 / CIP 107346 / CN-1) (Corynebacterium nigricans).